A 138-amino-acid chain; its full sequence is Outer membrane protein assembly factor BamE (138 aa).

The first 42 residues, 1 to 42 (MSHLTMIKTLNLRPFHSASALRKIVITSILGVAVTMSGCSLL), serve as a signal peptide directing secretion.

This sequence belongs to the BamE family. As to quaternary structure, part of the Bam complex.

The protein localises to the cell outer membrane. In terms of biological role, part of the outer membrane protein assembly complex, which is involved in assembly and insertion of beta-barrel proteins into the outer membrane. The polypeptide is Outer membrane protein assembly factor BamE (Psychrobacter arcticus (strain DSM 17307 / VKM B-2377 / 273-4)).